The sequence spans 118 residues: Protein TusC (118 aa).

It belongs to the DsrF/TusC family. Heterohexamer, formed by a dimer of trimers. The hexameric TusBCD complex contains 2 copies each of TusB, TusC and TusD. The TusBCD complex interacts with TusE.

The protein resides in the cytoplasm. Part of a sulfur-relay system required for 2-thiolation of 5-methylaminomethyl-2-thiouridine (mnm(5)s(2)U) at tRNA wobble positions. The chain is Protein TusC from Salmonella typhimurium (strain LT2 / SGSC1412 / ATCC 700720).